Consider the following 461-residue polypeptide: Putative 2,3-dihydroxypropane-1-sulfonate exporter (461 aa).

At 1–20 (MSHITTEDPATLRLPFKEKL) the chain is on the cytoplasmic side. The helical transmembrane segment at 21–41 (SYGIGDLASNILLDIGTLYLL) threads the bilayer. The Periplasmic segment spans residues 42-47 (KFYTDV). The helical transmembrane segment at 48–68 (LGLPGTYGGIIFLISKFFTAF) threads the bilayer. The Cytoplasmic portion of the chain corresponds to 69 to 92 (TDMGTGIMLDSRRKIGPKGKFRPF). A helical membrane pass occupies residues 93–113 (ILYASFPVTLLAIANFVGTPF). Residues 114-123 (DVTGKTVMAT) lie on the Periplasmic side of the membrane. A helical transmembrane segment spans residues 124–144 (ILFMLYGLFFSMMNCSYGAMV). Topologically, residues 145 to 162 (PAITKNPNERASLAAWRQ) are cytoplasmic. Residues 163 to 183 (GGATLGLLLCTVGFVPVMNLI) traverse the membrane as a helical segment. Residues 184–188 (EGNQQ) are Periplasmic-facing. The helical transmembrane segment at 189-209 (LGYIFAATLFSLFGLLFMWIC) threads the bilayer. Over 210–243 (YSGVKERYVETQPANPAQKPGLLQSFRAIAGNRP) the chain is Cytoplasmic. A helical membrane pass occupies residues 244 to 264 (LFILCIANLCTLGAFNVKLAI). Over 265–276 (QVYYTQYVLNDP) the chain is Periplasmic. Residues 277–297 (ILLSYMGFFSMGCIFIGVFLM) traverse the membrane as a helical segment. Over 298 to 308 (PASVRRFGKKK) the chain is Cytoplasmic. A helical membrane pass occupies residues 309-329 (VYIGGLLIWVLGDLLNYFFGG). Residue Gly330 is a topological domain, periplasmic. Residues 331–351 (SVSFVAFSCLAFFGSAFVNSL) traverse the membrane as a helical segment. Residues 352 to 387 (NWALVSDTVEYGEWRTGVRSEGTVYTGFTFFRKVSQ) are Cytoplasmic-facing. The chain crosses the membrane as a helical span at residues 388 to 408 (ALAGFFPGWMLTQIGYVPNVA). The Periplasmic segment spans residues 409 to 419 (QADHTIEGLRQ). The chain crosses the membrane as a helical span at residues 420–440 (LIFIYPSALAVVTIVAMGCFY). At 441-461 (SLNEKMYVRIVEEIEARKRTA) the chain is on the cytoplasmic side.

It belongs to the sodium:galactoside symporter (TC 2.A.2) family.

It localises to the cell inner membrane. In terms of biological role, could be involved in the export of 2,3-dihydroxypropane-1-sulfonate (DHPS). The polypeptide is Putative 2,3-dihydroxypropane-1-sulfonate exporter (yihP) (Escherichia coli (strain K12)).